The following is a 227-amino-acid chain: Enolase-phosphatase E1 (227 aa).

This sequence belongs to the HAD-like hydrolase superfamily. MasA/MtnC family. As to quaternary structure, monomer. It depends on Mg(2+) as a cofactor.

The catalysed reaction is 5-methylsulfanyl-2,3-dioxopentyl phosphate + H2O = 1,2-dihydroxy-5-(methylsulfanyl)pent-1-en-3-one + phosphate. Its pathway is amino-acid biosynthesis; L-methionine biosynthesis via salvage pathway; L-methionine from S-methyl-5-thio-alpha-D-ribose 1-phosphate: step 3/6. It functions in the pathway amino-acid biosynthesis; L-methionine biosynthesis via salvage pathway; L-methionine from S-methyl-5-thio-alpha-D-ribose 1-phosphate: step 4/6. Functionally, bifunctional enzyme that catalyzes the enolization of 2,3-diketo-5-methylthiopentyl-1-phosphate (DK-MTP-1-P) into the intermediate 2-hydroxy-3-keto-5-methylthiopentenyl-1-phosphate (HK-MTPenyl-1-P), which is then dephosphorylated to form the acireductone 1,2-dihydroxy-3-keto-5-methylthiopentene (DHK-MTPene). The polypeptide is Enolase-phosphatase E1 (Pseudomonas savastanoi pv. phaseolicola (strain 1448A / Race 6) (Pseudomonas syringae pv. phaseolicola (strain 1448A / Race 6))).